The chain runs to 515 residues: 1-pyrroline-5-carboxylate dehydrogenase (515 aa).

Catalysis depends on residues Glu286 and Cys320.

It belongs to the aldehyde dehydrogenase family. RocA subfamily.

It catalyses the reaction L-glutamate 5-semialdehyde + NAD(+) + H2O = L-glutamate + NADH + 2 H(+). The protein operates within amino-acid degradation; L-proline degradation into L-glutamate; L-glutamate from L-proline: step 2/2. The polypeptide is 1-pyrroline-5-carboxylate dehydrogenase (Bacillus cytotoxicus (strain DSM 22905 / CIP 110041 / 391-98 / NVH 391-98)).